A 468-amino-acid polypeptide reads, in one-letter code: Phenylalanine--tRNA ligase alpha subunit (468 aa).

Residues threonine 311, 350–352, and phenylalanine 390 contribute to the L-phenylalanine site; that span reads QLD. A Mg(2+)-binding site is contributed by glutamate 392.

The protein belongs to the class-II aminoacyl-tRNA synthetase family. Phe-tRNA synthetase alpha subunit type 2 subfamily. In terms of assembly, tetramer of two alpha and two beta subunits. Mg(2+) is required as a cofactor.

It localises to the cytoplasm. The catalysed reaction is tRNA(Phe) + L-phenylalanine + ATP = L-phenylalanyl-tRNA(Phe) + AMP + diphosphate + H(+). The sequence is that of Phenylalanine--tRNA ligase alpha subunit from Saccharolobus solfataricus (strain ATCC 35092 / DSM 1617 / JCM 11322 / P2) (Sulfolobus solfataricus).